The chain runs to 239 residues: Protein GrpE (239 aa).

2 disordered regions span residues 1 to 54 (MIEN…ELKN) and 208 to 239 (SMGP…SEDV). Over residues 19–42 (QDNALENVSSAQELTTENNELSSQ) the composition is skewed to polar residues. A compositionally biased stretch (basic and acidic residues) spans 43–53 (KTEEINTEELK). A compositionally biased stretch (acidic residues) spans 228–239 (DIDSEENTSEDV).

This sequence belongs to the GrpE family. As to quaternary structure, homodimer.

Its subcellular location is the cytoplasm. Its function is as follows. Participates actively in the response to hyperosmotic and heat shock by preventing the aggregation of stress-denatured proteins, in association with DnaK and GrpE. It is the nucleotide exchange factor for DnaK and may function as a thermosensor. Unfolded proteins bind initially to DnaJ; upon interaction with the DnaJ-bound protein, DnaK hydrolyzes its bound ATP, resulting in the formation of a stable complex. GrpE releases ADP from DnaK; ATP binding to DnaK triggers the release of the substrate protein, thus completing the reaction cycle. Several rounds of ATP-dependent interactions between DnaJ, DnaK and GrpE are required for fully efficient folding. The polypeptide is Protein GrpE (Prochlorococcus marinus (strain AS9601)).